The chain runs to 143 residues: Large ribosomal subunit protein uL13 (143 aa).

It belongs to the universal ribosomal protein uL13 family. As to quaternary structure, part of the 50S ribosomal subunit.

Its function is as follows. This protein is one of the early assembly proteins of the 50S ribosomal subunit, although it is not seen to bind rRNA by itself. It is important during the early stages of 50S assembly. The protein is Large ribosomal subunit protein uL13 of Desulfitobacterium hafniense (strain DSM 10664 / DCB-2).